Reading from the N-terminus, the 507-residue chain is Alpha-amylase 2 (507 aa).

The first 20 residues, 1 to 20 (MKFATILSTTALALSSLVAS), serve as a signal peptide directing secretion. A disulfide bridge connects residues cysteine 62 and cysteine 70. Residue tryptophan 115 coordinates substrate. Asparagine 153 is a binding site for Ca(2+). Histidine 154 is a binding site for substrate. The cysteines at positions 182 and 196 are disulfide-linked. Residues glutamate 194 and aspartate 207 each contribute to the Ca(2+) site. An N-linked (GlcNAc...) asparagine glycan is attached at asparagine 229. Arginine 236 lines the substrate pocket. Aspartate 238, histidine 242, and glutamate 262 together coordinate Ca(2+). Aspartate 238 (nucleophile) is an active-site residue. A substrate-binding site is contributed by 241 to 242 (KH). Glutamate 262 functions as the Proton donor in the catalytic mechanism. Glycine 266 lines the substrate pocket. Cysteines 272 and 315 form a disulfide. Residues aspartate 329 and arginine 376 each contribute to the substrate site. A disulfide bridge connects residues cysteine 470 and cysteine 505.

Belongs to the glycosyl hydrolase 13 family. Requires Ca(2+) as cofactor.

The catalysed reaction is Endohydrolysis of (1-&gt;4)-alpha-D-glucosidic linkages in polysaccharides containing three or more (1-&gt;4)-alpha-linked D-glucose units.. This chain is Alpha-amylase 2 (SWA2), found in Schwanniomyces occidentalis (Yeast).